The following is a 378-amino-acid chain: Ribosomal RNA large subunit methyltransferase G (378 aa).

The protein belongs to the methyltransferase superfamily. RlmG family.

It localises to the cytoplasm. It catalyses the reaction guanosine(1835) in 23S rRNA + S-adenosyl-L-methionine = N(2)-methylguanosine(1835) in 23S rRNA + S-adenosyl-L-homocysteine + H(+). Specifically methylates the guanine in position 1835 (m2G1835) of 23S rRNA. The sequence is that of Ribosomal RNA large subunit methyltransferase G from Salmonella newport (strain SL254).